Here is a 297-residue protein sequence, read N- to C-terminus: Acetyl-coenzyme A carboxylase carboxyl transferase subunit beta (297 aa).

The disordered stretch occupies residues 1-23 (MSWIERILGRTSSSSSSSKSKVP). Residues 26–295 (VWTKCTSCEQ…PFKTAELIVE (270 aa)) form the CoA carboxyltransferase N-terminal domain. Zn(2+)-binding residues include Cys30, Cys33, Cys49, and Cys52. The C4-type zinc finger occupies 30–52 (CTSCEQVLYSEELKRNMHVCPKC).

It belongs to the AccD/PCCB family. In terms of assembly, acetyl-CoA carboxylase is a heterohexamer composed of biotin carboxyl carrier protein (AccB), biotin carboxylase (AccC) and two subunits each of ACCase subunit alpha (AccA) and ACCase subunit beta (AccD). Zn(2+) is required as a cofactor.

It is found in the cytoplasm. It catalyses the reaction N(6)-carboxybiotinyl-L-lysyl-[protein] + acetyl-CoA = N(6)-biotinyl-L-lysyl-[protein] + malonyl-CoA. Its pathway is lipid metabolism; malonyl-CoA biosynthesis; malonyl-CoA from acetyl-CoA: step 1/1. In terms of biological role, component of the acetyl coenzyme A carboxylase (ACC) complex. Biotin carboxylase (BC) catalyzes the carboxylation of biotin on its carrier protein (BCCP) and then the CO(2) group is transferred by the transcarboxylase to acetyl-CoA to form malonyl-CoA. This chain is Acetyl-coenzyme A carboxylase carboxyl transferase subunit beta, found in Actinobacillus pleuropneumoniae serotype 5b (strain L20).